Consider the following 102-residue polypeptide: Plastocyanin (102 aa).

The Plastocyanin-like domain maps to 1–102 (AKVEVGDEVG…ANMKGTLTVK (102 aa)). His-37, Cys-87, His-90, and Met-95 together coordinate Cu cation.

The protein belongs to the plastocyanin family. Cu(2+) serves as cofactor.

The protein localises to the plastid. Its subcellular location is the chloroplast thylakoid membrane. Its function is as follows. Participates in electron transfer between P700 and the cytochrome b6-f complex in photosystem I. The polypeptide is Plastocyanin (PETE) (Dryopteris crassirhizoma (Thick stemmed wood fern)).